A 439-amino-acid chain; its full sequence is Hydroxyornithine transacylase SID3 (439 aa).

The short motif at 437-439 (SKL) is the PTS1-type peroxisomal targeting signal element.

Belongs to the lysine N-acyltransferase mbtK family.

Its subcellular location is the peroxisome. It participates in siderophore biosynthesis. Hydroxyornithine transacylase; part of the gene cluster that mediates the biosynthesis of hydroxamate-containing siderophores that play a critical role in virulence via intracellular iron acquisition during macrophage infection. This chain is Hydroxyornithine transacylase SID3, found in Ajellomyces capsulatus (Darling's disease fungus).